The sequence spans 378 residues: tRNA-specific 2-thiouridylase MnmA (378 aa).

Residues 12–19 (GLSGGVDS) and Met-38 contribute to the ATP site. Residues 98–100 (NPD) form an interaction with target base in tRNA region. Cys-103 (nucleophile) is an active-site residue. The cysteines at positions 103 and 201 are disulfide-linked. Position 127 (Gly-127) interacts with ATP. The interaction with tRNA stretch occupies residues 151–153 (KDQ). Cys-201 acts as the Cysteine persulfide intermediate in catalysis. The segment at 319 to 320 (RY) is interaction with tRNA.

The protein belongs to the MnmA/TRMU family.

Its subcellular location is the cytoplasm. It carries out the reaction S-sulfanyl-L-cysteinyl-[protein] + uridine(34) in tRNA + AH2 + ATP = 2-thiouridine(34) in tRNA + L-cysteinyl-[protein] + A + AMP + diphosphate + H(+). Functionally, catalyzes the 2-thiolation of uridine at the wobble position (U34) of tRNA, leading to the formation of s(2)U34. This Paracidovorax citrulli (strain AAC00-1) (Acidovorax citrulli) protein is tRNA-specific 2-thiouridylase MnmA.